A 279-amino-acid polypeptide reads, in one-letter code: NADPH-dependent 7-cyano-7-deazaguanine reductase (279 aa).

Substrate is bound at residue 86–88 (IES). 88 to 89 (SK) contributes to the NADPH binding site. The Thioimide intermediate role is filled by C187. The active-site Proton donor is the D194. Substrate is bound at residue 226 to 227 (HE). 255-256 (RG) contributes to the NADPH binding site.

It belongs to the GTP cyclohydrolase I family. QueF type 2 subfamily. Homodimer.

It localises to the cytoplasm. It carries out the reaction 7-aminomethyl-7-carbaguanine + 2 NADP(+) = 7-cyano-7-deazaguanine + 2 NADPH + 3 H(+). Its pathway is tRNA modification; tRNA-queuosine biosynthesis. Its function is as follows. Catalyzes the NADPH-dependent reduction of 7-cyano-7-deazaguanine (preQ0) to 7-aminomethyl-7-deazaguanine (preQ1). The polypeptide is NADPH-dependent 7-cyano-7-deazaguanine reductase (Haemophilus influenzae (strain PittEE)).